We begin with the raw amino-acid sequence, 479 residues long: Ribosomal RNA small subunit methyltransferase F (479 aa).

Residues 125 to 131, glutamate 149, aspartate 176, and aspartate 194 contribute to the S-adenosyl-L-methionine site; that span reads AAAPGSK. Cysteine 247 serves as the catalytic Nucleophile.

The protein belongs to the class I-like SAM-binding methyltransferase superfamily. RsmB/NOP family.

The protein resides in the cytoplasm. The enzyme catalyses cytidine(1407) in 16S rRNA + S-adenosyl-L-methionine = 5-methylcytidine(1407) in 16S rRNA + S-adenosyl-L-homocysteine + H(+). In terms of biological role, specifically methylates the cytosine at position 1407 (m5C1407) of 16S rRNA. The protein is Ribosomal RNA small subunit methyltransferase F of Shigella boydii serotype 4 (strain Sb227).